The following is a 96-amino-acid chain: Small ribosomal subunit protein bS6 (96 aa).

This sequence belongs to the bacterial ribosomal protein bS6 family.

Binds together with bS18 to 16S ribosomal RNA. This chain is Small ribosomal subunit protein bS6, found in Streptococcus mutans serotype c (strain ATCC 700610 / UA159).